Consider the following 309-residue polypeptide: Homoserine kinase (309 aa).

91 to 101 (PIGSGLGSSAC) contributes to the ATP binding site.

This sequence belongs to the GHMP kinase family. Homoserine kinase subfamily.

The protein resides in the cytoplasm. The enzyme catalyses L-homoserine + ATP = O-phospho-L-homoserine + ADP + H(+). Its pathway is amino-acid biosynthesis; L-threonine biosynthesis; L-threonine from L-aspartate: step 4/5. Catalyzes the ATP-dependent phosphorylation of L-homoserine to L-homoserine phosphate. This is Homoserine kinase from Salmonella paratyphi B (strain ATCC BAA-1250 / SPB7).